The following is a 276-amino-acid chain: MTWHARLQLDYRREGPRTVAGFLHDGPLRILQSLYPEGGGICHNVLVHPPGGLVGGDTLDIAATVAPGAHGLVTTPGATRFYRSTGAPALQRTQATLAAGARLEWLPLEALCYSACQAENRLTLSLSPGAECIAWDVTALGLPHSGQPFATGRFTQHIEVPGIWLERGTIDAADGLLMDGRLGLAGHRCLASVFFVAGEALPRERREAALDAARAVIDAHALRETAGATSPHPQVVVVRVLAPVVEPAMELLRRAWGAWREHLWGLQPRQPRIWAM.

Belongs to the UreD family. UreD, UreF and UreG form a complex that acts as a GTP-hydrolysis-dependent molecular chaperone, activating the urease apoprotein by helping to assemble the nickel containing metallocenter of UreC. The UreE protein probably delivers the nickel.

It localises to the cytoplasm. Functionally, required for maturation of urease via the functional incorporation of the urease nickel metallocenter. This is Urease accessory protein UreD from Paracidovorax citrulli (strain AAC00-1) (Acidovorax citrulli).